A 76-amino-acid chain; its full sequence is ATP synthase subunit 9, mitochondrial (76 aa).

2 helical membrane-spanning segments follow: residues 11–31 (IGAG…GIVF) and 53–73 (ILGF…AFLI).

The protein belongs to the ATPase C chain family. As to quaternary structure, F-type ATPases have 2 components, CF(1) - the catalytic core - and CF(0) - the membrane proton channel. CF(1) has five subunits: alpha(3), beta(3), gamma(1), delta(1), epsilon(1). CF(0) has three main subunits: a, b and c.

It localises to the mitochondrion membrane. This protein is one of the chains of the nonenzymatic membrane component (F0) of mitochondrial ATPase. The sequence is that of ATP synthase subunit 9, mitochondrial (ATP9) from Chondrus crispus (Carrageen Irish moss).